Here is a 129-residue protein sequence, read N- to C-terminus: Regulator of ribonuclease activity B (129 aa).

It belongs to the RraB family. As to quaternary structure, interacts with the C-terminal region of Rne.

Its subcellular location is the cytoplasm. In terms of biological role, globally modulates RNA abundance by binding to RNase E (Rne) and regulating its endonucleolytic activity. Can modulate Rne action in a substrate-dependent manner by altering the composition of the degradosome. This Shewanella denitrificans (strain OS217 / ATCC BAA-1090 / DSM 15013) protein is Regulator of ribonuclease activity B.